A 112-amino-acid polypeptide reads, in one-letter code: Urocortin-2 (112 aa).

The signal sequence occupies residues 1-22; that stretch reads MTRCALLLLMVLMLGRVLVVPV. The propeptide occupies 23-70; that stretch reads TPIPTFQLRPQNSPQTTPRPAASESPSAAPTWPWAAQSHCSPTRHPGS. The disordered stretch occupies residues 27 to 66; sequence TFQLRPQNSPQTTPRPAASESPSAAPTWPWAAQSHCSPTR. The segment covering 38–58 has biased composition (low complexity); the sequence is TTPRPAASESPSAAPTWPWAA.

It belongs to the sauvagine/corticotropin-releasing factor/urotensin I family. As to quaternary structure, binds with high affinity to CRF receptors 2-alpha and 2-beta. In terms of processing, glycosylated.

The protein resides in the secreted. In terms of biological role, suppresses food intake, delays gastric emptying and decreases heat-induced edema. Might represent an endogenous ligand for maintaining homeostasis after stress. The polypeptide is Urocortin-2 (UCN2) (Homo sapiens (Human)).